Consider the following 315-residue polypeptide: Protein ADP-ribosyltransferase (315 aa).

The 287-residue stretch at 13–299 (LMDEKTKQAE…TTALRNDSTT (287 aa)) folds into the Deacetylase sirtuin-type domain. NAD(+) contacts are provided by residues Ala40, 123–126 (TNAD), and Gln143. Residues Cys151, Cys155, Cys186, and Cys189 each coordinate Zn(2+). NAD(+) contacts are provided by residues 238–240 (YTT), Asn264, Tyr268, and Ile285.

The protein belongs to the sirtuin family. Class M subfamily. Requires Zn(2+) as cofactor.

The enzyme catalyses L-aspartyl-[protein] + NAD(+) = 4-O-(ADP-D-ribosyl)-L-aspartyl-[protein] + nicotinamide. With respect to regulation, is inhibited by Tenovin-6 in vitro, but not by nicotinamide. Catalyzes specifically the mono-ADP-ribosylation of GcvH-L (SAV0324). This activity is dependent on prior lipoylation of the target protein. May be involved in the modulation of the response to host-derived oxidative stress. In contrast to other sirtuin classes, lacks protein deacylase activity, being unable to catalyze delipoylation, debiotinylation, deacetylation and desuccinylation of proteins. The sequence is that of Protein ADP-ribosyltransferase from Staphylococcus aureus (strain Mu50 / ATCC 700699).